An 81-amino-acid chain; its full sequence is Photosystem I iron-sulfur center (81 aa).

4Fe-4S ferredoxin-type domains lie at 2–31 (AHIV…MVPW) and 39–68 (MASA…VRVY). Positions 11, 14, 17, 21, 48, 51, 54, and 58 each coordinate [4Fe-4S] cluster.

The eukaryotic PSI reaction center is composed of at least 11 subunits. [4Fe-4S] cluster is required as a cofactor.

Its subcellular location is the plastid. The protein localises to the chloroplast thylakoid membrane. The enzyme catalyses reduced [plastocyanin] + hnu + oxidized [2Fe-2S]-[ferredoxin] = oxidized [plastocyanin] + reduced [2Fe-2S]-[ferredoxin]. Apoprotein for the two 4Fe-4S centers FA and FB of photosystem I (PSI); essential for photochemical activity. FB is the terminal electron acceptor of PSI, donating electrons to ferredoxin. The C-terminus interacts with PsaA/B/D and helps assemble the protein into the PSI complex. Required for binding of PsaD and PsaE to PSI. PSI is a plastocyanin/cytochrome c6-ferredoxin oxidoreductase, converting photonic excitation into a charge separation, which transfers an electron from the donor P700 chlorophyll pair to the spectroscopically characterized acceptors A0, A1, FX, FA and FB in turn. The chain is Photosystem I iron-sulfur center from Chlamydomonas reinhardtii (Chlamydomonas smithii).